A 458-amino-acid polypeptide reads, in one-letter code: Glycogen synthase (458 aa).

Lys-15 is an ADP-alpha-D-glucose binding site.

Belongs to the glycosyltransferase 1 family. Bacterial/plant glycogen synthase subfamily.

It carries out the reaction [(1-&gt;4)-alpha-D-glucosyl](n) + ADP-alpha-D-glucose = [(1-&gt;4)-alpha-D-glucosyl](n+1) + ADP + H(+). It functions in the pathway glycan biosynthesis; glycogen biosynthesis. Synthesizes alpha-1,4-glucan chains using ADP-glucose. This Gloeobacter violaceus (strain ATCC 29082 / PCC 7421) protein is Glycogen synthase.